The following is a 110-amino-acid chain: uncharacterized protein (110 aa).

A helical membrane pass occupies residues 88-108; it reads LTRICLLIFGIGLVVLIFLKL.

It is found in the membrane. This is an uncharacterized protein from Rickettsia prowazekii (strain Madrid E).